Reading from the N-terminus, the 223-residue chain is Shematrin-like protein 2 (223 aa).

The N-terminal stretch at 1–19 is a signal peptide; the sequence is MRILANLILLGVLFGVCLC.

In terms of tissue distribution, prismatic layer of shell (at protein level).

The protein localises to the secreted. The sequence is that of Shematrin-like protein 2 from Margaritifera margaritifera (Freshwater pearl mussel).